The primary structure comprises 491 residues: ATP-dependent protease ATPase subunit HslU (491 aa).

ATP is bound by residues isoleucine 34, 76–81, aspartate 296, glutamate 364, and arginine 436; that span reads GVGKTE.

This sequence belongs to the ClpX chaperone family. HslU subfamily. In terms of assembly, a double ring-shaped homohexamer of HslV is capped on each side by a ring-shaped HslU homohexamer. The assembly of the HslU/HslV complex is dependent on binding of ATP.

The protein resides in the cytoplasm. ATPase subunit of a proteasome-like degradation complex; this subunit has chaperone activity. The binding of ATP and its subsequent hydrolysis by HslU are essential for unfolding of protein substrates subsequently hydrolyzed by HslV. HslU recognizes the N-terminal part of its protein substrates and unfolds these before they are guided to HslV for hydrolysis. This is ATP-dependent protease ATPase subunit HslU from Chlorobaculum tepidum (strain ATCC 49652 / DSM 12025 / NBRC 103806 / TLS) (Chlorobium tepidum).